The sequence spans 984 residues: MYCBP-associated protein (984 aa).

Disordered regions lie at residues 61-88 and 218-240; these read LEASENVKEKKRAKGPEQPTPTIQEEPE and GESKQKAPKEEKRPPWAPPPQHN. Basic and acidic residues predominate over residues 218–231; it reads GESKQKAPKEEKRP. Residue Thr-613 is modified to Phosphothreonine. Residue Ser-619 is modified to Phosphoserine. Disordered regions lie at residues 693 to 729 and 842 to 917; these read SPISETQVPRPENEALRESGSQKARVGTKSPQRKSIM and PEEQ…ASQD. Residues 862 to 910 show a composition bias toward basic and acidic residues; that stretch reads AGKEERKGAAQEKKQLGIKDKEDKKGAKLLGKEDRPNSKKHKAKDDKKV.

Interacts with MYCBP. Expressed specifically in testis.

The protein localises to the cytoplasm. Its subcellular location is the membrane. Functionally, may play a role in spermatogenesis. May be involved in synaptic processes. This chain is MYCBP-associated protein, found in Homo sapiens (Human).